The chain runs to 1055 residues: Protein SUPPRESSOR OF QUENCHING 1, chloroplastic (1055 aa).

The transit peptide at 1 to 56 (MALKLTSPPSVFSQSRRLSSSSLIPIRSKSTFTGFRSRTGVYLSKTTALQSSTKLS) directs the protein to the chloroplast. Residue V57 is modified to N-acetylvaline. The Stromal segment spans residues 59–327 (AESPAATIAT…FQGSRRDILR (269 aa)). Catalysis depends on D80, which acts as the Nucleophile. Mg(2+) contacts are provided by D80 and D82. D80 lines the substrate pocket. Catalysis depends on D82, which acts as the Proton donor. Substrate is bound by residues E89, 118–122 (TGEAK), 141–144 (AKER), and 183–189 (SSADRIK). D242 contacts Mg(2+). The helical transmembrane segment at 328-345 (YGSLGIALSCVYFAATNW) threads the bilayer. Residues 346-1055 (KAMQYASPKA…AGGLQLQGTR (710 aa)) are Lumenal-facing. One can recognise a Thioredoxin domain in the interval 359-536 (ALVGAKSPSF…LDDVVAAALT (178 aa)). An intrachain disulfide couples C431 to C434. 5 NHL repeats span residues 565-597 (PLKF…TDLE), 611-647 (GFQD…NHAL), 673-712 (GRKG…YSVL), 802-832 (LQHP…LDPV), and 854-887 (GAQL…IDLN).

It in the N-terminal section; belongs to the HAD-like hydrolase superfamily. The protein in the C-terminal section; belongs to the thioredoxin family. It depends on Mg(2+) as a cofactor.

Its subcellular location is the plastid. The protein localises to the chloroplast thylakoid membrane. In terms of biological role, required to maintain light harvesting efficiency, especially during nonphotochemical quenching (NPQ) recovery, via the regulation of chlorophyll excited-state lifetime probably by preventing the formation of a slowly reversible form of antenna quenching. This Arabidopsis thaliana (Mouse-ear cress) protein is Protein SUPPRESSOR OF QUENCHING 1, chloroplastic.